The chain runs to 353 residues: DNA replication and repair protein RecF (353 aa).

30-37 (GANGQGKT) lines the ATP pocket.

The protein belongs to the RecF family.

It localises to the cytoplasm. The RecF protein is involved in DNA metabolism; it is required for DNA replication and normal SOS inducibility. RecF binds preferentially to single-stranded, linear DNA. It also seems to bind ATP. This Carboxydothermus hydrogenoformans (strain ATCC BAA-161 / DSM 6008 / Z-2901) protein is DNA replication and repair protein RecF.